The chain runs to 389 residues: S-adenosylmethionine synthase (389 aa).

ATP is bound at residue His-17. Residue Asp-19 participates in Mg(2+) binding. Glu-45 contacts K(+). Glu-58 and Gln-101 together coordinate L-methionine. The flexible loop stretch occupies residues 101–111 (QSPDISQGVTE). Residues 168–170 (DSK), 234–235 (RF), Asp-243, 249–250 (RK), Ala-266, and Lys-270 contribute to the ATP site. Asp-243 contributes to the L-methionine binding site. Lys-274 lines the L-methionine pocket.

The protein belongs to the AdoMet synthase family. In terms of assembly, homotetramer; dimer of dimers. It depends on Mg(2+) as a cofactor. K(+) is required as a cofactor.

The protein localises to the cytoplasm. It catalyses the reaction L-methionine + ATP + H2O = S-adenosyl-L-methionine + phosphate + diphosphate. It functions in the pathway amino-acid biosynthesis; S-adenosyl-L-methionine biosynthesis; S-adenosyl-L-methionine from L-methionine: step 1/1. Catalyzes the formation of S-adenosylmethionine (AdoMet) from methionine and ATP. The overall synthetic reaction is composed of two sequential steps, AdoMet formation and the subsequent tripolyphosphate hydrolysis which occurs prior to release of AdoMet from the enzyme. This is S-adenosylmethionine synthase from Geobacter sulfurreducens (strain ATCC 51573 / DSM 12127 / PCA).